We begin with the raw amino-acid sequence, 390 residues long: 8-amino-7-oxononanoate synthase (390 aa).

Arg19 provides a ligand contact to substrate. 106 to 107 (GY) lines the pyridoxal 5'-phosphate pocket. Residue His131 coordinates substrate. Pyridoxal 5'-phosphate contacts are provided by Ser176, His204, and Thr233. Lys236 bears the N6-(pyridoxal phosphate)lysine mark. Thr350 lines the substrate pocket.

It belongs to the class-II pyridoxal-phosphate-dependent aminotransferase family. BioF subfamily. As to quaternary structure, homodimer. The cofactor is pyridoxal 5'-phosphate.

The catalysed reaction is 6-carboxyhexanoyl-[ACP] + L-alanine + H(+) = (8S)-8-amino-7-oxononanoate + holo-[ACP] + CO2. The protein operates within cofactor biosynthesis; biotin biosynthesis. Its function is as follows. Catalyzes the decarboxylative condensation of pimeloyl-[acyl-carrier protein] and L-alanine to produce 8-amino-7-oxononanoate (AON), [acyl-carrier protein], and carbon dioxide. The protein is 8-amino-7-oxononanoate synthase of Pseudomonas putida (strain GB-1).